Here is a 156-residue protein sequence, read N- to C-terminus: Small ribosomal subunit protein uS7 (156 aa).

It belongs to the universal ribosomal protein uS7 family. As to quaternary structure, part of the 30S ribosomal subunit. Contacts proteins S9 and S11.

In terms of biological role, one of the primary rRNA binding proteins, it binds directly to 16S rRNA where it nucleates assembly of the head domain of the 30S subunit. Is located at the subunit interface close to the decoding center, probably blocks exit of the E-site tRNA. This Erwinia tasmaniensis (strain DSM 17950 / CFBP 7177 / CIP 109463 / NCPPB 4357 / Et1/99) protein is Small ribosomal subunit protein uS7.